A 598-amino-acid polypeptide reads, in one-letter code: Protein unc-93 homolog B1 (598 aa).

The disordered stretch occupies residues 1–36 (MEVEPPLYPVAGAAGPQGDEDRHGVPDGPEAPLDEL). Transmembrane regions (helical) follow at residues 64–84 (VLAASTGVTLTYGVYLGLLQM), 110–130 (KMLMGINVTPIAALLYTPVLI), 132–152 (FFGTKWMMFLAVGIYALFVST), 160–180 (TLVPSAVALGMAIVPLWASMG), and 223–243 (IFYSFFHLSFACAQLPMIYFL). 2 N-linked (GlcNAc...) asparagine glycosylation sites follow: Asn-251 and Asn-272. The next 5 membrane-spanning stretches (helical) occupy residues 285-305 (LIVVESVLMAVAFLAMLMVLG), 343-363 (LVPFFIYSGFEVLFACTGFAL), 378-398 (LLIAYSLGASASSVLGLLGLW), 403-423 (VPLVAGAGLHLLLTLSLFFWA), and 428-448 (VLQHSWIFYFVAALWGVGSAL). N-linked (GlcNAc...) asparagine glycosylation occurs at Asn-449. A run of 2 helical transmembrane segments spans residues 469 to 489 (FIFTIYHWWQAVAIFVVYLGS) and 495 to 515 (AKLAVLLVTLVAAAASYLWME). The disordered stretch occupies residues 524–598 (PRQPRIPKPQ…ALGGDGPEEQ (75 aa)). Over residues 544–554 (EDNSDESDMEG) the composition is skewed to acidic residues. 2 positions are modified to phosphoserine: Ser-547 and Ser-550.

Belongs to the unc-93 family. As to quaternary structure, interacts with TLR3, TLR5, TLR7, TLR8, TLR9 and TLR13 (probably via transmembrane domain). N-glycosylated.

The protein localises to the endoplasmic reticulum membrane. The protein resides in the endosome. It is found in the lysosome. Its subcellular location is the cytoplasmic vesicle. It localises to the phagosome. Its function is as follows. Plays an important role in innate and adaptive immunity by regulating nucleotide-sensing Toll-like receptor (TLR) signaling. Required for the transport of a subset of TLRs (including TLR3, TLR7 and TLR9) from the endoplasmic reticulum to endolysosomes where they can engage pathogen nucleotides and activate signaling cascades. May play a role in autoreactive B-cells removal. The protein is Protein unc-93 homolog B1 of Mus musculus (Mouse).